We begin with the raw amino-acid sequence, 414 residues long: BICD family-like cargo adapter 2 (414 aa).

The stretch at 34 to 341 (GQALLEKNEE…DALNQQLLNT (308 aa)) forms a coiled coil. A compositionally biased stretch (basic and acidic residues) spans 372 to 384 (QEKEKENNKERTG). The tract at residues 372-399 (QEKEKENNKERTGFQRGTRTTKSLRLRG) is disordered.

In Danio rerio (Zebrafish), this protein is BICD family-like cargo adapter 2 (bicdl2).